A 70-amino-acid chain; its full sequence is uncharacterized protein (70 aa).

Residues 15–37 (LLVSSISESAVALIIITIRILFS) form a helical membrane-spanning segment.

The protein resides in the membrane. This is an uncharacterized protein from Saccharomyces cerevisiae (strain ATCC 204508 / S288c) (Baker's yeast).